The sequence spans 463 residues: Argininosuccinate lyase (463 aa).

This sequence belongs to the lyase 1 family. Argininosuccinate lyase subfamily.

Its subcellular location is the cytoplasm. It carries out the reaction 2-(N(omega)-L-arginino)succinate = fumarate + L-arginine. Its pathway is amino-acid biosynthesis; L-arginine biosynthesis; L-arginine from L-ornithine and carbamoyl phosphate: step 3/3. The chain is Argininosuccinate lyase from Staphylococcus epidermidis (strain ATCC 35984 / DSM 28319 / BCRC 17069 / CCUG 31568 / BM 3577 / RP62A).